Here is a 467-residue protein sequence, read N- to C-terminus: Ribulose bisphosphate carboxylase large chain (467 aa).

Position 5 is an N6,N6,N6-trimethyllysine (Lys-5). Residues Asn-114 and Thr-164 each contribute to the substrate site. The active-site Proton acceptor is the Lys-166. Residue Lys-168 coordinates substrate. 3 residues coordinate Mg(2+): Lys-192, Asp-194, and Glu-195. Lys-192 is modified (N6-carboxylysine). His-285 acts as the Proton acceptor in catalysis. Residues Arg-286, His-318, and Ser-370 each coordinate substrate.

It belongs to the RuBisCO large chain family. Type I subfamily. In terms of assembly, heterohexadecamer of 8 large chains and 8 small chains; disulfide-linked. The disulfide link is formed within the large subunit homodimers. Requires Mg(2+) as cofactor. The disulfide bond which can form in the large chain dimeric partners within the hexadecamer appears to be associated with oxidative stress and protein turnover.

It is found in the plastid. The protein resides in the chloroplast. The enzyme catalyses 2 (2R)-3-phosphoglycerate + 2 H(+) = D-ribulose 1,5-bisphosphate + CO2 + H2O. The catalysed reaction is D-ribulose 1,5-bisphosphate + O2 = 2-phosphoglycolate + (2R)-3-phosphoglycerate + 2 H(+). RuBisCO catalyzes two reactions: the carboxylation of D-ribulose 1,5-bisphosphate, the primary event in carbon dioxide fixation, as well as the oxidative fragmentation of the pentose substrate in the photorespiration process. Both reactions occur simultaneously and in competition at the same active site. This Jasminum simplicifolium subsp. suavissimum (Native jasmine) protein is Ribulose bisphosphate carboxylase large chain.